Reading from the N-terminus, the 227-residue chain is 27 kDa A-type inclusion protein (227 aa).

Residues Met4–Ser210 adopt a coiled-coil conformation.

This chain is 27 kDa A-type inclusion protein, found in Bos taurus (Bovine).